Consider the following 276-residue polypeptide: ATP synthase subunit a 2 (276 aa).

5 helical membrane passes run A45–F65, V105–L125, V154–I173, L226–W246, and A247–V267.

Belongs to the ATPase A chain family. In terms of assembly, F-type ATPases have 2 components, CF(1) - the catalytic core - and CF(0) - the membrane proton channel. CF(1) has five subunits: alpha(3), beta(3), gamma(1), delta(1), epsilon(1). CF(0) has three main subunits: a(1), b(2) and c(9-12). The alpha and beta chains form an alternating ring which encloses part of the gamma chain. CF(1) is attached to CF(0) by a central stalk formed by the gamma and epsilon chains, while a peripheral stalk is formed by the delta and b chains.

It is found in the cell inner membrane. In terms of biological role, key component of the proton channel; it plays a direct role in the translocation of protons across the membrane. This Hahella chejuensis (strain KCTC 2396) protein is ATP synthase subunit a 2.